We begin with the raw amino-acid sequence, 116 residues long: Ribonuclease P protein component (116 aa).

This sequence belongs to the RnpA family. Consists of a catalytic RNA component (M1 or rnpB) and a protein subunit.

It catalyses the reaction Endonucleolytic cleavage of RNA, removing 5'-extranucleotides from tRNA precursor.. In terms of biological role, RNaseP catalyzes the removal of the 5'-leader sequence from pre-tRNA to produce the mature 5'-terminus. It can also cleave other RNA substrates such as 4.5S RNA. The protein component plays an auxiliary but essential role in vivo by binding to the 5'-leader sequence and broadening the substrate specificity of the ribozyme. The chain is Ribonuclease P protein component from Bacillus velezensis (strain DSM 23117 / BGSC 10A6 / LMG 26770 / FZB42) (Bacillus amyloliquefaciens subsp. plantarum).